Reading from the N-terminus, the 429-residue chain is Phosphoribosylamine--glycine ligase (429 aa).

One can recognise an ATP-grasp domain in the interval 109–316 (KDFLARHQIP…LVDLCLAACD (208 aa)). Residue 135–196 (LREKGAPIVI…EEFLDGEEAS (62 aa)) coordinates ATP. The Mg(2+) site is built by Glu286 and Asn288.

The protein belongs to the GARS family. Monomer. The cofactor is Mg(2+). It depends on Mn(2+) as a cofactor.

The catalysed reaction is 5-phospho-beta-D-ribosylamine + glycine + ATP = N(1)-(5-phospho-beta-D-ribosyl)glycinamide + ADP + phosphate + H(+). It functions in the pathway purine metabolism; IMP biosynthesis via de novo pathway; N(1)-(5-phospho-D-ribosyl)glycinamide from 5-phospho-alpha-D-ribose 1-diphosphate: step 2/2. The sequence is that of Phosphoribosylamine--glycine ligase from Salmonella typhi.